The primary structure comprises 168 residues: uncharacterized protein (168 aa).

Disordered stretches follow at residues 1–35 (MGSS…KKLD), 48–97 (KVKK…DKGN), and 126–168 (ASIT…GLGM). A coiled-coil region spans residues 29–95 (KEKKKLDEKE…KNSLSRSQDK (67 aa)). Positions 68-85 (LAEDPMVKNVAENDHDQM) are enriched in basic and acidic residues. A compositionally biased stretch (polar residues) spans 126-139 (ASITESSPSAQSNK). The span at 140–150 (TNDKQREKELE) shows a compositional bias: basic and acidic residues. Residues 157-168 (VLHKGTKKGLGM) are compositionally biased toward basic residues.

This is an uncharacterized protein from Schizosaccharomyces pombe (strain 972 / ATCC 24843) (Fission yeast).